We begin with the raw amino-acid sequence, 439 residues long: Trigger factor (439 aa).

The PPIase FKBP-type domain maps to 165–250 (GDFAKFDFEG…LHEIQELKLP (86 aa)).

The protein belongs to the FKBP-type PPIase family. Tig subfamily.

The protein localises to the cytoplasm. The catalysed reaction is [protein]-peptidylproline (omega=180) = [protein]-peptidylproline (omega=0). In terms of biological role, involved in protein export. Acts as a chaperone by maintaining the newly synthesized protein in an open conformation. Functions as a peptidyl-prolyl cis-trans isomerase. This chain is Trigger factor, found in Campylobacter lari (strain RM2100 / D67 / ATCC BAA-1060).